We begin with the raw amino-acid sequence, 494 residues long: Transcriptional regulator of yeast form adherence 3 (494 aa).

The 360-residue stretch at 1–360 (MKFAKTLERT…SLGIQKTFPK (360 aa)) folds into the SPX domain. The RING-type zinc-finger motif lies at 398-437 (CPICMNIAYKPIRLSCGHLFCVRCLVKMKQDDKTSCPLCR).

Its subcellular location is the nucleus. Functionally, transcription factor required for yeast cell adherence to silicone substrate. The chain is Transcriptional regulator of yeast form adherence 3 (TRY3) from Candida albicans (strain SC5314 / ATCC MYA-2876) (Yeast).